Consider the following 321-residue polypeptide: tRNA dimethylallyltransferase (321 aa).

24–31 is an ATP binding site; sequence GPTASGKS. Substrate is bound at residue 26-31; sequence TASGKS. Interaction with substrate tRNA regions lie at residues 49–52 and 172–176; these read DSMQ and QRIVR.

Belongs to the IPP transferase family. Monomer. Requires Mg(2+) as cofactor.

The catalysed reaction is adenosine(37) in tRNA + dimethylallyl diphosphate = N(6)-dimethylallyladenosine(37) in tRNA + diphosphate. Catalyzes the transfer of a dimethylallyl group onto the adenine at position 37 in tRNAs that read codons beginning with uridine, leading to the formation of N6-(dimethylallyl)adenosine (i(6)A). The protein is tRNA dimethylallyltransferase of Mesorhizobium japonicum (strain LMG 29417 / CECT 9101 / MAFF 303099) (Mesorhizobium loti (strain MAFF 303099)).